A 158-amino-acid chain; its full sequence is Cytochrome c-type biogenesis protein CcmE (158 aa).

The Cytoplasmic portion of the chain corresponds to 1 to 7 (MKPRHRR). A helical; Signal-anchor for type II membrane protein transmembrane segment spans residues 8–28 (LTLIALVLGGLGLSAGLALTA). The Periplasmic portion of the chain corresponds to 29 to 158 (FQDNLVFFFT…DGHPETTTAY (130 aa)). His123 and Tyr127 together coordinate heme. Residues 138 to 158 (RIGQGNGTPGPDGHPETTTAY) are disordered.

The protein belongs to the CcmE/CycJ family.

Its subcellular location is the cell inner membrane. In terms of biological role, heme chaperone required for the biogenesis of c-type cytochromes. Transiently binds heme delivered by CcmC and transfers the heme to apo-cytochromes in a process facilitated by CcmF and CcmH. The chain is Cytochrome c-type biogenesis protein CcmE from Alkalilimnicola ehrlichii (strain ATCC BAA-1101 / DSM 17681 / MLHE-1).